The primary structure comprises 266 residues: Small ribosomal subunit protein uS2 (266 aa).

Residues 233–266 are disordered; the sequence is AVREEEFASAPDAGKKGRQAQPKKGKRASDAAAE. Positions 248–258 are enriched in basic residues; the sequence is KGRQAQPKKGK.

It belongs to the universal ribosomal protein uS2 family.

This chain is Small ribosomal subunit protein uS2, found in Xylella fastidiosa (strain M23).